The chain runs to 255 residues: Hydroxyethylthiazole kinase (255 aa).

Met38 is a substrate binding site. ATP contacts are provided by Arg114 and Thr160. A substrate-binding site is contributed by Gly187.

The protein belongs to the Thz kinase family. Mg(2+) serves as cofactor.

The enzyme catalyses 5-(2-hydroxyethyl)-4-methylthiazole + ATP = 4-methyl-5-(2-phosphooxyethyl)-thiazole + ADP + H(+). The protein operates within cofactor biosynthesis; thiamine diphosphate biosynthesis; 4-methyl-5-(2-phosphoethyl)-thiazole from 5-(2-hydroxyethyl)-4-methylthiazole: step 1/1. Its function is as follows. Catalyzes the phosphorylation of the hydroxyl group of 4-methyl-5-beta-hydroxyethylthiazole (THZ). This chain is Hydroxyethylthiazole kinase, found in Lysinibacillus sphaericus (strain C3-41).